Consider the following 230-residue polypeptide: Large ribosomal subunit protein bL25 (230 aa).

It belongs to the bacterial ribosomal protein bL25 family. CTC subfamily. In terms of assembly, part of the 50S ribosomal subunit; part of the 5S rRNA/L5/L18/L25 subcomplex. Contacts the 5S rRNA. Binds to the 5S rRNA independently of L5 and L18.

This is one of the proteins that binds to the 5S RNA in the ribosome where it forms part of the central protuberance. This is Large ribosomal subunit protein bL25 (rplY) from Rhodopseudomonas palustris (strain ATCC BAA-98 / CGA009).